We begin with the raw amino-acid sequence, 235 residues long: Ribitol-5-phosphate cytidylyltransferase (235 aa).

CTP is bound by residues 7–10, 82–88, and Ser-113; these read LAGG and GADRNTS.

This sequence belongs to the IspD/TarI cytidylyltransferase family. TarI subfamily.

The catalysed reaction is D-ribitol 5-phosphate + CTP + H(+) = CDP-L-ribitol + diphosphate. It participates in cell wall biogenesis; poly(ribitol phosphate) teichoic acid biosynthesis. Functionally, catalyzes the transfer of the cytidylyl group of CTP to D-ribitol 5-phosphate. The protein is Ribitol-5-phosphate cytidylyltransferase of Streptococcus pneumoniae serotype 19F (strain G54).